A 278-amino-acid polypeptide reads, in one-letter code: Nudix hydrolase 2 (278 aa).

The region spanning 110–242 is the Nudix hydrolase domain; it reads SHRVGIGAFV…ELLRYMTDIC (133 aa). The short motif at 147 to 168 is the Nudix box element; the sequence is GVVNEGEDIHDGSVREVKEETG. Glu-162 lines the Mg(2+) pocket. Catalysis depends on Glu-165, which acts as the Proton acceptor. Glu-166 serves as a coordination point for Mg(2+).

It belongs to the Nudix hydrolase family. Requires Mg(2+) as cofactor. The cofactor is Mn(2+). In terms of tissue distribution, expressed in roots, stems and leaves.

The enzyme catalyses ADP-D-ribose + H2O = D-ribose 5-phosphate + AMP + 2 H(+). It catalyses the reaction NAD(+) + H2O = beta-nicotinamide D-ribonucleotide + AMP + 2 H(+). The catalysed reaction is NADH + H2O = reduced beta-nicotinamide D-ribonucleotide + AMP + 2 H(+). In terms of biological role, probably mediates the hydrolysis of some nucleoside diphosphate derivatives. In vitro, it can use both NADH and ADP-ribose as substrates; however the relevance of such substrates in vivo is unclear. Confers tolerance to oxidative stress. This Arabidopsis thaliana (Mouse-ear cress) protein is Nudix hydrolase 2.